Consider the following 86-residue polypeptide: NAD(P)H-quinone oxidoreductase subunit O (86 aa).

It belongs to the complex I NdhO subunit family. In terms of assembly, NDH-1 can be composed of about 15 different subunits; different subcomplexes with different compositions have been identified which probably have different functions.

The protein localises to the cellular thylakoid membrane. It carries out the reaction a plastoquinone + NADH + (n+1) H(+)(in) = a plastoquinol + NAD(+) + n H(+)(out). It catalyses the reaction a plastoquinone + NADPH + (n+1) H(+)(in) = a plastoquinol + NADP(+) + n H(+)(out). In terms of biological role, NDH-1 shuttles electrons from an unknown electron donor, via FMN and iron-sulfur (Fe-S) centers, to quinones in the respiratory and/or the photosynthetic chain. The immediate electron acceptor for the enzyme in this species is believed to be plastoquinone. Couples the redox reaction to proton translocation, and thus conserves the redox energy in a proton gradient. Cyanobacterial NDH-1 also plays a role in inorganic carbon-concentration. The protein is NAD(P)H-quinone oxidoreductase subunit O of Prochlorococcus marinus (strain SARG / CCMP1375 / SS120).